A 506-amino-acid polypeptide reads, in one-letter code: DEAD-box ATP-dependent RNA helicase CshA (506 aa).

The short motif at 2 to 30 is the Q motif element; that stretch reads QNFKELGISDNTVQSLESMGFKEPTPIQK. In terms of domain architecture, Helicase ATP-binding spans 33 to 203; that stretch reads IPYALQGIDI…QQFMKSPKII (171 aa). Residue 46-53 coordinates ATP; the sequence is AQTGTGKT. Positions 150 to 153 match the DEAD box motif; sequence DEAD. The 162-residue stretch at 214–375 folds into the Helicase C-terminal domain; sequence QIEEFYTIVK…LRPPHRKEVL (162 aa). The interval 436–506 is disordered; it reads EKPLSRKGRN…KGRTFADHQK (71 aa). The span at 468–480 shows a compositional bias: basic residues; sequence KRSKGYSSKKKST.

Belongs to the DEAD box helicase family. CshA subfamily. Oligomerizes, may be a member of the RNA degradosome.

It localises to the cytoplasm. It catalyses the reaction ATP + H2O = ADP + phosphate + H(+). Its function is as follows. DEAD-box RNA helicase possibly involved in RNA degradation. Unwinds dsRNA in both 5'- and 3'-directions, has RNA-dependent ATPase activity. The protein is DEAD-box ATP-dependent RNA helicase CshA of Staphylococcus aureus (strain bovine RF122 / ET3-1).